The sequence spans 379 residues: Type II methyltransferase M.SsoII (379 aa).

The 58-residue stretch at 9–66 folds into the HTH cro/C1-type domain; that stretch reads IKEKRERLHMTQKEFADALGLSKYGDRTIRRWERGETKPTGAELKAVIDFPDTPPYPN. The region spanning 72-379 is the SAM-dependent MTase C5-type domain; that stretch reads YRMIDLFAGI…AEKIISTLDS (308 aa). Residue Cys142 is part of the active site.

Belongs to the class I-like SAM-binding methyltransferase superfamily. C5-methyltransferase family.

It catalyses the reaction a 2'-deoxycytidine in DNA + S-adenosyl-L-methionine = a 5-methyl-2'-deoxycytidine in DNA + S-adenosyl-L-homocysteine + H(+). In terms of biological role, a methylase that recognizes the double-stranded sequence 5'-CCNGG-3', methylates C-2 on both strands, and protects the DNA from cleavage by the SsoII endonuclease. The sequence is that of Type II methyltransferase M.SsoII (ssoIIM) from Shigella sonnei.